We begin with the raw amino-acid sequence, 237 residues long: Phosphoribosylaminoimidazole-succinocarboxamide synthase (237 aa).

The protein belongs to the SAICAR synthetase family.

The enzyme catalyses 5-amino-1-(5-phospho-D-ribosyl)imidazole-4-carboxylate + L-aspartate + ATP = (2S)-2-[5-amino-1-(5-phospho-beta-D-ribosyl)imidazole-4-carboxamido]succinate + ADP + phosphate + 2 H(+). It participates in purine metabolism; IMP biosynthesis via de novo pathway; 5-amino-1-(5-phospho-D-ribosyl)imidazole-4-carboxamide from 5-amino-1-(5-phospho-D-ribosyl)imidazole-4-carboxylate: step 1/2. The polypeptide is Phosphoribosylaminoimidazole-succinocarboxamide synthase (Yersinia pseudotuberculosis serotype O:1b (strain IP 31758)).